The primary structure comprises 330 residues: AA9 family lytic polysaccharide monooxygenase E (330 aa).

A signal peptide spans 1-20 (MRSTLVTGLIAGLLSQQAAA). Histidine 21 and histidine 99 together coordinate Cu(2+). Cysteine 58 and cysteine 193 are oxidised to a cystine. Residues histidine 179 and glutamine 188 each contribute to the O2 site. A Cu(2+)-binding site is contributed by tyrosine 190. One can recognise a CBM1 domain in the interval 293 to 330 (CSVAKYQQCGGTGYTGCTSCASGSTCSAVSPPYYSQCV).

This sequence belongs to the polysaccharide monooxygenase AA9 family. Requires Cu(2+) as cofactor.

The protein localises to the secreted. The enzyme catalyses [(1-&gt;4)-beta-D-glucosyl]n+m + reduced acceptor + O2 = 4-dehydro-beta-D-glucosyl-[(1-&gt;4)-beta-D-glucosyl]n-1 + [(1-&gt;4)-beta-D-glucosyl]m + acceptor + H2O.. Lytic polysaccharide monooxygenase (LPMO) that depolymerizes crystalline and amorphous polysaccharides via the oxidation of scissile alpha- or beta-(1-4)-glycosidic bonds, yielding exclusively C1 oxidation products. Catalysis by LPMOs requires the reduction of the active-site copper from Cu(II) to Cu(I) by a reducing agent and H(2)O(2) or O(2) as a cosubstrate. The protein is AA9 family lytic polysaccharide monooxygenase E (gh61-5) of Neurospora crassa (strain ATCC 24698 / 74-OR23-1A / CBS 708.71 / DSM 1257 / FGSC 987).